Reading from the N-terminus, the 337-residue chain is D-alanine--D-alanine ligase (337 aa).

The ATP-grasp domain occupies 124-330 (KMWFSALGIP…FTEYLSLVIN (207 aa)). Residue 154-209 (ALANWGSIFIKAASQGSSVGCYKVDDSSKVAQVLKDAFGYAPYVVVEKTIKARELE) coordinates ATP. Residues Asp-284, Glu-297, and Asn-299 each contribute to the Mg(2+) site.

The protein belongs to the D-alanine--D-alanine ligase family. It depends on Mg(2+) as a cofactor. Mn(2+) is required as a cofactor.

It is found in the cytoplasm. It carries out the reaction 2 D-alanine + ATP = D-alanyl-D-alanine + ADP + phosphate + H(+). The protein operates within cell wall biogenesis; peptidoglycan biosynthesis. Functionally, cell wall formation. This chain is D-alanine--D-alanine ligase, found in Shewanella sp. (strain W3-18-1).